The chain runs to 843 residues: MYEGKHIHYSEVDHKPLCSYSPKLCKQRRLNGYAFCIRHVLEDRTAPFRQCEYVAKYNSQRCTNPIPKAHDRKYCNSHLQVMGVLPKKERKKKQDTIESLALNITVPSLALKTHNGLEILPPSPPPALVCLLPSDPFSFYKEEKMLKSSGAFLKKPQETLNHKQKQQDHSVDTNHLRTSSLPSTLSHSCLPPLLTGRATQTPINPSSPRAATPTVRSGSLFKTSSSLQDTHQGSKDSTDNKIKLDLNHAFDKKVVPAASGMAPCCDDTQSQLIKKCTVAMQQQAPCLKKLHRLMDQHKGRFQDLNSHLGLDWSEDSEEEDGDWKLVSYQCQRLQEKRSEESRSWAERLAGFCSYLRQKHMHLCREQRGFRRERRSQHALRKALVQAAREEPHQTAQLIQEQHQVTSAPSSTAVSLAGDDSGLCQAVVKGENCRNSALPFTRHCFQHILQNRSQQLFSSCTARFADGAQCSIPVFDITHQTPLCDEHAKKMDNFLRGDISRRTYHHHQQIQRHRPLKKAKPPALSKKHKKKGKRGTQRRPQKPIPPALPQGNLALPSILCLPSQPSGIRSPLTPDLSADEFPDDITNDISDIPHDLELNQEDFSDVLPRLPDDLQDFDLFEGKNSELLPTSEEAEELVRVLQAMGSYPESLACLSGMAELGPVEGVDCRSMPGGVVDLLSARLSAETLSSLELDPSLLHPSEDAFPPSPPSPQPPLTPPSSVGHLTDSTYTQRQPHLLAKMEDSKADLANLPLGKDEDVSHGSWGVLALPLSDSSQFHSLIASDGLLMPTGLSTPCQPSSALSALPQSSQTRSTTTSPTSQTKHLPPPPTVQALWDPSRLTAAP.

Residues 159–175 (TLNHKQKQQDHSVDTNH) show a composition bias toward basic and acidic residues. Disordered stretches follow at residues 159-216 (TLNH…PTVR), 221-240 (FKTSSSLQDTHQGSKDSTDN), 503-550 (YHHH…LPQG), 695-726 (SLLHPSEDAFPPSPPSPQPPLTPPSSVGHLTD), and 791-843 (LSTP…TAAP). Polar residues-rich tracts occupy residues 176–187 (LRTSSLPSTLSH), 197–216 (RATQTPINPSSPRAATPTVR), and 221–231 (FKTSSSLQDTH). Over residues 503–540 (YHHHQQIQRHRPLKKAKPPALSKKHKKKGKRGTQRRPQ) the composition is skewed to basic residues. The segment covering 705–717 (PPSPPSPQPPLTP) has biased composition (pro residues). Over residues 796–821 (QPSSALSALPQSSQTRSTTTSPTSQT) the composition is skewed to low complexity.

This sequence belongs to the INO80D family. Component of the chromatin-remodeling INO80 complex.

Its subcellular location is the nucleus. Its function is as follows. Putative regulatory component of the chromatin remodeling INO80 complex which is involved in transcriptional regulation, DNA replication and probably DNA repair. This chain is INO80 complex subunit D-B (ino80db), found in Danio rerio (Zebrafish).